A 189-amino-acid chain; its full sequence is uncharacterized protein (189 aa).

This is an uncharacterized protein from Saccharomyces cerevisiae (strain ATCC 204508 / S288c) (Baker's yeast).